The chain runs to 501 residues: Probable cytochrome P450 6a20 (501 aa).

Heme is bound at residue Cys445.

Belongs to the cytochrome P450 family. It depends on heme as a cofactor.

It is found in the endoplasmic reticulum membrane. The protein localises to the microsome membrane. May be involved in the metabolism of insect hormones and in the breakdown of synthetic insecticides. The chain is Probable cytochrome P450 6a20 (Cyp6a20) from Drosophila melanogaster (Fruit fly).